We begin with the raw amino-acid sequence, 275 residues long: T cell receptor alpha chain MC.7.G5 (275 aa).

Residues 1 to 21 (MACPGFLWALVISTCLEFSMA) form the signal peptide. An Ig-like V-type domain is found at 22–116 (QTVTQSQPEM…AAMYFCAYRS (95 aa)). Positions 22-116 (QTVTQSQPEM…AAMYFCAYRS (95 aa)) are t cell receptor alpha variable 38-2DV8. Cysteines 43 and 112 form a disulfide. The tract at residues 47-53 (TSESDYY) is CDR1. A CDR2 region spans residues 71 to 81 (QEAYKQQNATE). A glycan (N-linked (GlcNAc...) asparagine) is linked at asparagine 78. The tract at residues 112–124 (CAYRSAVNARLMF) is CDR3. Residues 119–134 (NARLMFGDGTQLVVKP) are t cell receptor alpha joining 31. Positions 136 to 275 (IQNPDPAVYQ…LLMTLRLWSS (140 aa)) are t cell receptor alpha constant. An Ig-like C1-type domain is found at 154–242 (KSVCLFTDFD…LVEKSFETDT (89 aa)). Cysteine 157 and cysteine 207 form a disulfide bridge. N-linked (GlcNAc...) asparagine glycans are attached at residues asparagine 167, asparagine 201, asparagine 212, and asparagine 248. The segment at 229-250 (CDVKLVEKSFETDTNLNFQNLS) is connecting peptide. A helical membrane pass occupies residues 251 to 273 (VIGFRILLLKVAGFNLLMTLRLW). Residues 274-275 (SS) lie on the Cytoplasmic side of the membrane.

Disulfide-linked heterodimer with TRBV25-1*01J2S3*01C2*01 beta chain. The alpha-beta TR associates with the transmembrane signaling CD3 coreceptor proteins to form the TR-CD3 (TCR). The assembly of alpha-beta TR heterodimers with CD3 occurs in the endoplasmic reticulum where a single alpha-beta TR heterodimer associates with one CD3D-CD3E heterodimer, one CD3G-CD3E heterodimer and one CD247 homodimer forming a stable octameric structure. CD3D-CD3E and CD3G-CD3E heterodimers preferentially associate with TR alpha and TR beta chains (via TM domain), respectively. The association of the CD247 homodimer is the last step of TCR assembly in the endoplasmic reticulum and is required for transport to the cell surface. Expressed in MR1-restricted CD8-positive T cells.

Its subcellular location is the cell membrane. In terms of biological role, the alpha chain of TRAV38-2DV8*01J31*01C*01/TRBV25-1*01J2S3*01C2*01 alpha-beta T cell receptor (TR) clonotype that displays pan-cancer cell recognition via the invariant MR1 molecule. On CD8-positive T cell clone MC.7.G5, likely recognizes tumor-specific or -associated metabolite(s) essential for cancer cell survival, triggering killing of many cancer cell types including lung, melanoma, leukemia, colon, breast, prostate, bone and ovarian cancer cells. Mediates cancer cell cytotoxicity in an HLA-independent manner. Has no reactivity to healthy cells, even stressed or infected by bacteria. Antigen recognition initiates TR-CD3 clustering on the cell surface and intracellular activation of LCK that phosphorylates the ITAM motifs of CD3G, CD3D, CD3E and CD247 enabling the recruitment of ZAP70. In turn, ZAP70 phosphorylates LAT, which recruits numerous signaling molecules to form the LAT signalosome. The LAT signalosome propagates signal branching to three major signaling pathways, the calcium, the mitogen-activated protein kinase (MAPK) kinase and the nuclear factor NF-kappa-B (NF-kB) pathways, leading to the mobilization of transcription factors that are critical for gene expression and essential for T cell differentiation into effector/memory T cells. The polypeptide is T cell receptor alpha chain MC.7.G5 (Homo sapiens (Human)).